The following is a 242-amino-acid chain: C-reactive protein 3.3 (242 aa).

An N-terminal signal peptide occupies residues 1-24 (MKTFHGPTCGTAVSLCLLLFLTSA). A Pentraxin (PTX) domain is found at 30-241 (ITSKVKFPPS…GVVLSPNEIC (212 aa)). The phosphocholine site is built by Thr-60 and Tyr-63. Cystine bridges form between Cys-62–Cys-125 and Cys-112–Cys-144. Residues Asp-85 and Asn-86 each coordinate Ca(2+). A glycan (N-linked (GlcNAc...) asparagine) is linked at Asn-147. Ca(2+) is bound by residues Gln-169, Asp-170, and Gln-180. A disulfide bridge connects residues Cys-207 and Cys-241.

It belongs to the pentraxin family. In terms of assembly, homopentamer. Pentraxin (or pentaxin) have a discoid arrangement of 5 non-covalently bound subunits. The cofactor is Ca(2+).

The protein resides in the secreted. Might serve the role of immunoglobulins. This chain is C-reactive protein 3.3, found in Limulus polyphemus (Atlantic horseshoe crab).